The following is a 515-amino-acid chain: Iridoid oxidase (515 aa).

A run of 2 helical transmembrane segments spans residues 8–28 (SLNP…IIFV) and 180–200 (AVQL…NLML). C455 contacts heme.

The protein belongs to the cytochrome P450 family. Expressed in the leaf internal phloem-associated parenchyma (IPAP) inside the mesophyll.

The protein localises to the endoplasmic reticulum membrane. It catalyses the reaction (+)-cis-trans-nepetalactol + 3 reduced [NADPH--hemoprotein reductase] + 3 O2 = 7-deoxyloganetate + 3 oxidized [NADPH--hemoprotein reductase] + 4 H2O + 4 H(+). It functions in the pathway alkaloid biosynthesis. Functionally, component of the seco-iridoid and derivatives monoterpenoid indole alkaloids (MIAs, e.g. vincristine, quinine, and strychnine) biosynthesis pathway. Catalyzes the conversion of cis-trans-nepetalactol (iridodial) into 7-deoxyloganetic acid. Also converts iridotrial into 7-deoxyloganetic acid. The chain is Iridoid oxidase from Catharanthus roseus (Madagascar periwinkle).